The primary structure comprises 74 residues: Kappa-scoloptoxin(07)-Ssm2e (74 aa).

The first 19 residues, 1-19 (MLVFYALLFVSVFSNTVMG), serve as a signal peptide directing secretion. A propeptide spanning residues 20–41 (ATIDMPIPKPILREAIEEIDVN) is cleaved from the precursor.

It belongs to the scoloptoxin-07 family. Post-translationally, contains 3 disulfide bonds. Expressed by the venom gland.

The protein localises to the secreted. In terms of biological role, inhibits voltage-gated potassium channels. The polypeptide is Kappa-scoloptoxin(07)-Ssm2e (Scolopendra mutilans (Chinese red-headed centipede)).